The following is a 344-amino-acid chain: Unsaturated rhamnogalacturonyl hydrolase YesR (344 aa).

Substrate is bound by residues 30-31 (DW), Asn-74, and 118-128 (QHTVNAAEYVF). Asp-135 acts as the Proton donor in catalysis. Substrate is bound by residues 198-202 (RANGW) and 308-309 (NA).

It belongs to the glycosyl hydrolase 105 family. As to quaternary structure, monomer.

Its subcellular location is the cytoplasm. It carries out the reaction 2-O-(4-deoxy-beta-L-threo-hex-4-enopyranuronosyl)-alpha-L-rhamnose + H2O = 5-dehydro-4-deoxy-D-glucuronate + L-rhamnopyranose. In terms of biological role, catalyzes the hydrolysis of unsaturated rhamnogalacturonan disaccharide to yield unsaturated D-galacturonic acid and L-rhamnose. It cannot act on unsaturated glucuronyl hydrolase (UGL) substrates containing unsaturated D-glucuronic acid at the non-reducing terminus, although the active pockets of YesR and UGL are very similar. The protein is Unsaturated rhamnogalacturonyl hydrolase YesR (yesR) of Bacillus subtilis (strain 168).